The chain runs to 209 residues: SelT-like protein (209 aa).

Residues 1-22 (MDKTQLILLGLPIFLLCSDLFN) form the signal peptide. Cysteines 64 and 67 form a disulfide.

It belongs to the SelWTH family. SELT subfamily.

This is SelT-like protein from Arabidopsis thaliana (Mouse-ear cress).